Reading from the N-terminus, the 196-residue chain is MINKIYGKIVDKKESSIIILAFPFEFEILVSSFCKMELRLLEDVEILTYFHFRDDDVKLFGFLNISEREVFEDLIGVDGIGPKAALKILSGIKYDAFRLAIAKEDINLISKVKGIGNKIAGKIFLKLRGKLVKGDESSSYMLKFKELEQSIVNMGFDRKLVVVAFREIMLSDKFLILKEAEQEQFLFTETLKRLSV.

The tract at residues 1–63 is domain I; the sequence is MINKIYGKIV…DDDVKLFGFL (63 aa). Residues 64-142 are domain II; it reads NISEREVFED…KGDESSSYML (79 aa). A region of interest (flexible linker) is located at residue Lys143. The domain III stretch occupies residues 143-196; sequence KFKELEQSIVNMGFDRKLVVVAFREIMLSDKFLILKEAEQEQFLFTETLKRLSV.

It belongs to the RuvA family. Homotetramer. Forms an RuvA(8)-RuvB(12)-Holliday junction (HJ) complex. HJ DNA is sandwiched between 2 RuvA tetramers; dsDNA enters through RuvA and exits via RuvB. An RuvB hexamer assembles on each DNA strand where it exits the tetramer. Each RuvB hexamer is contacted by two RuvA subunits (via domain III) on 2 adjacent RuvB subunits; this complex drives branch migration. In the full resolvosome a probable DNA-RuvA(4)-RuvB(12)-RuvC(2) complex forms which resolves the HJ.

The protein resides in the cytoplasm. The RuvA-RuvB-RuvC complex processes Holliday junction (HJ) DNA during genetic recombination and DNA repair, while the RuvA-RuvB complex plays an important role in the rescue of blocked DNA replication forks via replication fork reversal (RFR). RuvA specifically binds to HJ cruciform DNA, conferring on it an open structure. The RuvB hexamer acts as an ATP-dependent pump, pulling dsDNA into and through the RuvAB complex. HJ branch migration allows RuvC to scan DNA until it finds its consensus sequence, where it cleaves and resolves the cruciform DNA. This Borrelia duttonii (strain Ly) protein is Holliday junction branch migration complex subunit RuvA.